A 376-amino-acid polypeptide reads, in one-letter code: Fibromodulin (376 aa).

The signal sequence occupies residues 1-18; sequence MQWASVLLLAGLCSLSQG. Gln-19 is subject to Pyrrolidone carboxylic acid. Sulfotyrosine is present on residues Tyr-20, Tyr-38, Tyr-53, Tyr-55, Tyr-63, and Tyr-65. Residues 67-105 form the LRRNT domain; the sequence is APPPPEPRDCPQECDCPPNFPTAMYCDNRNLKYLPFVPS. 8 LRR repeats span residues 106-127, 130-151, 156-176, 177-198, 201-222, 224-245, 246-266, and 269-289; these read RMKY…VFDN, GLLW…RKVF, HLER…PLPR, SLRE…ALEG, NLTA…MRGL, SLIL…LPSA, LEQL…YFRG, and KLLY…ATNT. An N-linked (GlcNAc...) (keratan sulfate) asparagine glycan is attached at Asn-127. Asn-166 carries an N-linked (GlcNAc...) (keratan sulfate) asparagine glycan. A glycan (N-linked (GlcNAc...) (keratan sulfate) asparagine) is linked at Asn-201. N-linked (GlcNAc...) (keratan sulfate) asparagine glycosylation occurs at Asn-291. LRR repeat units lie at residues 294–315 and 316–335; these read SLLE…NTNL and ENLY…SFCT. Cys-334 and Cys-367 are joined by a disulfide. Asn-341 carries N-linked (GlcNAc...) asparagine glycosylation. One copy of the LRR 11 repeat lies at 344–367; sequence KLQVLRLDGNEIKRSAMPVDAPLC.

It belongs to the small leucine-rich proteoglycan (SLRP) family. SLRP class II subfamily. In terms of assembly, binds to type I and type II collagen. In terms of processing, binds keratan sulfate chains. Post-translationally, sulfated on tyrosine residue(s). In terms of tissue distribution, highest levels observed in knee epiphysis, in calvarial and diaphyseal bone, in nasal and costal cartilage, in the eye, and in bladder. In mature knee joint it is mostly present in the proliferating zone of growth plate. It is also observed in ligaments, especially at insertion sites, in the junction between meniscus and joint capsule, in the perimysium of skeletal muscle and in the periosteum.

It localises to the secreted. Its subcellular location is the extracellular space. It is found in the extracellular matrix. Functionally, affects the rate of fibrils formation. May have a primary role in collagen fibrillogenesis. The sequence is that of Fibromodulin (Fmod) from Mus musculus (Mouse).